The chain runs to 81 residues: ATP synthase subunit c, chloroplastic (81 aa).

Helical transmembrane passes span 3–23 (PIIC…GAIG) and 57–77 (LAFM…IIFA).

This sequence belongs to the ATPase C chain family. F-type ATPases have 2 components, F(1) - the catalytic core - and F(0) - the membrane proton channel. F(1) has five subunits: alpha(3), beta(3), gamma(1), delta(1), epsilon(1). F(0) has four main subunits: a(1), b(1), b'(1) and c(10-14). The alpha and beta chains form an alternating ring which encloses part of the gamma chain. F(1) is attached to F(0) by a central stalk formed by the gamma and epsilon chains, while a peripheral stalk is formed by the delta, b and b' chains.

The protein resides in the plastid. It is found in the chloroplast thylakoid membrane. F(1)F(0) ATP synthase produces ATP from ADP in the presence of a proton or sodium gradient. F-type ATPases consist of two structural domains, F(1) containing the extramembraneous catalytic core and F(0) containing the membrane proton channel, linked together by a central stalk and a peripheral stalk. During catalysis, ATP synthesis in the catalytic domain of F(1) is coupled via a rotary mechanism of the central stalk subunits to proton translocation. In terms of biological role, key component of the F(0) channel; it plays a direct role in translocation across the membrane. A homomeric c-ring of between 10-14 subunits forms the central stalk rotor element with the F(1) delta and epsilon subunits. The sequence is that of ATP synthase subunit c, chloroplastic from Euglena gracilis.